Reading from the N-terminus, the 245-residue chain is Probable membrane transporter protein YdhB (245 aa).

8 helical membrane passes run 1–21, 34–56, 71–91, 98–118, 137–157, 177–197, 199–219, and 225–245; these read MLIILVMFLLGIILGFIGAGG, HIPIHTALGTSLAGMAFTSLSGA, LIVGGFAAVGSFFGAKLTSFI, YLTAGMLFLSAILILIRLFIL, ILGIAAGVLSGTFGIGSAPFI, MLVIIPLAVGGGIGYITEGFV, YVLLVKVLVGTMCGAYVGAKF, and KVVLKSAIFLTPAIAGLLLLF.

This sequence belongs to the 4-toluene sulfonate uptake permease (TSUP) (TC 2.A.102) family.

The protein resides in the cell membrane. The polypeptide is Probable membrane transporter protein YdhB (ydhB) (Bacillus subtilis (strain 168)).